Consider the following 349-residue polypeptide: 2-oxoglutarate and iron-dependent oxygenase domain-containing protein 2 (349 aa).

In terms of domain architecture, Fe2OG dioxygenase spans 211-305 (DSHRAFVVKY…RWNLILWMRA (95 aa)). The Fe cation site is built by H231, D233, and H286. A 2-oxoglutarate-binding site is contributed by R296.

This sequence belongs to the OGFOD2 family. It depends on Fe(2+) as a cofactor. Requires L-ascorbate as cofactor.

This is 2-oxoglutarate and iron-dependent oxygenase domain-containing protein 2 (ogfod2) from Xenopus tropicalis (Western clawed frog).